Consider the following 128-residue polypeptide: L-ectoine synthase (128 aa).

The protein belongs to the ectoine synthase family.

It carries out the reaction (2S)-4-acetamido-2-aminobutanoate = L-ectoine + H2O. It participates in amine and polyamine biosynthesis; ectoine biosynthesis; L-ectoine from L-aspartate 4-semialdehyde: step 3/3. Its function is as follows. Catalyzes the circularization of gamma-N-acetyl-alpha,gamma-diaminobutyric acid (ADABA) to ectoine (1,4,5,6-tetrahydro-2-methyl-4-pyrimidine carboxylic acid), which is an excellent osmoprotectant. This chain is L-ectoine synthase, found in Vibrio atlanticus (strain LGP32) (Vibrio splendidus (strain Mel32)).